Here is a 383-residue protein sequence, read N- to C-terminus: Na(+)/H(+) antiporter NhaA (383 aa).

11 helical membrane-spanning segments follow: residues Leu-10–Pro-30, Leu-56–Ile-76, Ile-91–Ser-111, Gly-121–Gly-141, Leu-150–Phe-170, Ser-174–Asn-194, Val-206–Ala-226, Pro-254–Ser-274, Ile-289–Phe-308, Gly-327–Phe-347, and Ala-355–Leu-375.

The protein belongs to the NhaA Na(+)/H(+) (TC 2.A.33) antiporter family.

The protein resides in the cell inner membrane. The catalysed reaction is Na(+)(in) + 2 H(+)(out) = Na(+)(out) + 2 H(+)(in). In terms of biological role, na(+)/H(+) antiporter that extrudes sodium in exchange for external protons. The protein is Na(+)/H(+) antiporter NhaA of Francisella tularensis subsp. holarctica (strain FTNF002-00 / FTA).